Here is a 456-residue protein sequence, read N- to C-terminus: 3-isopropylmalate dehydratase large subunit (456 aa).

[4Fe-4S] cluster-binding residues include Cys-336, Cys-396, and Cys-399.

This sequence belongs to the aconitase/IPM isomerase family. LeuC type 1 subfamily. As to quaternary structure, heterodimer of LeuC and LeuD. Requires [4Fe-4S] cluster as cofactor.

The catalysed reaction is (2R,3S)-3-isopropylmalate = (2S)-2-isopropylmalate. The protein operates within amino-acid biosynthesis; L-leucine biosynthesis; L-leucine from 3-methyl-2-oxobutanoate: step 2/4. Catalyzes the isomerization between 2-isopropylmalate and 3-isopropylmalate, via the formation of 2-isopropylmaleate. This chain is 3-isopropylmalate dehydratase large subunit, found in Staphylococcus epidermidis (strain ATCC 35984 / DSM 28319 / BCRC 17069 / CCUG 31568 / BM 3577 / RP62A).